A 142-amino-acid chain; its full sequence is Large ribosomal subunit protein uL11 (142 aa).

This sequence belongs to the universal ribosomal protein uL11 family. As to quaternary structure, part of the ribosomal stalk of the 50S ribosomal subunit. Interacts with L10 and the large rRNA to form the base of the stalk. L10 forms an elongated spine to which L12 dimers bind in a sequential fashion forming a multimeric L10(L12)X complex. One or more lysine residues are methylated.

Functionally, forms part of the ribosomal stalk which helps the ribosome interact with GTP-bound translation factors. The protein is Large ribosomal subunit protein uL11 of Hamiltonella defensa subsp. Acyrthosiphon pisum (strain 5AT).